Consider the following 925-residue polypeptide: Antiviral innate immune response receptor RIG-I (925 aa).

2 consecutive CARD domains span residues 1–87 and 92–172; these read MTTE…GLYE and WDFK…KTLK. Serine 8 is modified ((Microbial infection) Phosphoserine). Serine 8 is subject to Phosphoserine. Residues lysine 48, lysine 96, lysine 154, and lysine 164 each participate in a glycyl lysine isopeptide (Lys-Gly) (interchain with G-Cter in ubiquitin) cross-link. Residue threonine 170 is modified to Phosphothreonine. Glycyl lysine isopeptide (Lys-Gly) (interchain with G-Cter in ubiquitin) cross-links involve residues lysine 172, lysine 181, lysine 193, and lysine 203. Positions 218-925 are interaction with ZC3HAV1; sequence ECQNLSENSC…IPFDPAEMSK (708 aa). A Helicase ATP-binding domain is found at 251–430; sequence ALPAMKGKNT…DEALDYICKL (180 aa). 264–271 provides a ligand contact to ATP; that stretch reads APTGCGKT. Positions 372-375 match the DECH box motif; sequence DECH. A (Microbial infection) Deamidated asparagine; by herpes simplex virus 1/HHV-1 UL37 mark is found at asparagine 495 and asparagine 549. In terms of domain architecture, Helicase C-terminal spans 610–776; sequence KLEDLCFILQ…RLQTWDEAVF (167 aa). Positions 735–925 are mediates interaction with RNF135; sequence GSKCFLLTSN…IPFDPAEMSK (191 aa). Position 770 is a phosphothreonine; by CK2 (threonine 770). In terms of domain architecture, RLR CTR spans 794 to 925; the sequence is QEKPKPVPDK…IPFDPAEMSK (132 aa). Cysteine 810 is a binding site for Zn(2+). Residue lysine 812 forms a Glycyl lysine isopeptide (Lys-Gly) (interchain with G-Cter in ubiquitin) linkage. Cysteine 813 provides a ligand contact to Zn(2+). Serine 854 and serine 855 each carry phosphoserine; by CK2. Position 858 is an N6-acetyllysine (lysine 858). Positions 864 and 869 each coordinate Zn(2+). At lysine 909 the chain carries N6-acetyllysine.

It belongs to the helicase family. RLR subfamily. Monomer; maintained as a monomer in an autoinhibited state. Upon binding of viral RNAs and conformational shift, homooligomerizes and forms filaments on these molecules. Interacts (via tandem CARD domain) with MAVS/IPS1 promoting its filamentation. Interacts with DHX58/LGP2, IKBKE, TBK1 and STING1. Interacts (via CARD domain) with TRIM25 (via SPRY domain). Interacts (double-stranded RNA-bound oligomeric form) with RNF135 (homodimer); involved in RNA length-dependent activation of the RIG-I signaling pathway. Interacts with CYLD. Interacts with NLRC5; blocks the interaction of MAVS/IPS1 to RIGI. Interacts with SRC. Interacts with DDX60. Interacts with isoform 2 of ZC3HAV1 (via zinc-fingers) in an RNA-dependent manner. Interacts (via tandem CARD domain) with SEC14L1; the interaction is direct and impairs the interaction of RIGI with MAVS/IPS1. Interacts with VCP/p97; interaction is direct and allows the recruitment of RNF125 and subsequent ubiquitination and degradation. Interacts with NOP53; may regulate RIGI through USP15-mediated 'Lys-63'-linked deubiquitination. Interacts with SIGLEC10, CBL and PTPN11; within a negative feedback loop leading to RIGI degradation. Interacts with LRRC25. Interacts with ZCCHC3; leading to activation of RIGI. Interacts with RNF123. Interacts with UBE2D3 and UBE2N; E2 ubiquitin ligases involved in RNF135-mediated ubiquitination of RIGI and activation of the RIG-I signaling pathway. Interacts with IFIT3. Interacts with DDX3X. Interacts with RTN3. Interacts with ARL16; this interaction is GTP-dependent and induced upon viral infection; this interaction suppresses the RNA sensing activity of RIGI. Interacts with DHX16; this interaction enhances RIGI-mediated antiviral response. Interacts with IRGM; promoting RIGI degradation. Interacts with IFI6; this interaction inhibits RIGI activation. Interacts with ECSIT; this interaction bridges RIGI to the MAVS complex at the mitochondrion. Interacts with YWHAE; this interaction drives RIGI at the mitochondrion. In terms of assembly, (Microbial infection) Interacts with protein Z of Guanarito virus, Machupo virus, Junin arenavirus and Sabia virus. This interaction disrupts its interaction with MAVS/IPS1, impeding downstream IRF3 and NF-kappa-B activation and resulting in decreased IFN-beta induction. As to quaternary structure, (Microbial infection) Interacts (via CARD domain) with Human respiratory syncytial virus A non-structural protein 2 (NS2) and this interaction disrupts its interaction with MAVS/IPS1, impeding downstream IRF3 activation. (Microbial infection) Interacts with Rotavirus A non-structural protein 1 (NSP1) and this interaction induces down-regulation of RIGI. In terms of assembly, (Microbial infection) Interacts with paramyxoviruses (Sendai virus, Nipah virus, Measles virus and Parainfluenza virus 5) protein V; this interaction inhibits TRIM25-mediated ubiquitination of RIG-I and prevents downstream RIG-I signaling thereby inhibiting the IFN responses. As to quaternary structure, (Microbial infection) Interacts with herpes simplex virus 1 protein US11; this interaction prevents the interaction of MAVS/IPS1 to RIGI. (Microbial infection) Interacts with herpes simplex virus 1 protein UL37; this interaction deaminates RIGI and inhibits its activation. In terms of assembly, (Microbial infection) Interacts with Severe fever with thrombocytopenia virus (SFTSV) NSs; this interaction this interaction sequesters RIGI in NSs-induced cytoplasmic inclusion bodies thereby inhibiting the IFN responses. Phosphorylated in resting cells and dephosphorylated in RNA virus-infected cells. Phosphorylation at Thr-770, Ser-854 and Ser-855 results in inhibition of its activity while dephosphorylation at these sites results in its activation. In terms of processing, ubiquitinated. 'Lys-63' ubiquitination by RNF135, which occurs after RNA-binding and homodimerization, releases the autoinhibition of the CARD domains by the RLR CTR domain, an essential step in the activation of the RIG-I signaling pathway. Lys-172 is the critical site of ubiquitination for MAVS/IPS1 binding and to induce anti-viral signal transduction. Lys-154, Lys-164 and Lys-172 are shared sites for RNF135-mediated and TRIM4-mediated ubiquitination. Also undergoes 'Lys-48' ubiquitination at Lys-181 by RNF125 that leads to proteasomal degradation. 'Lys-48' ubiquitination follows viral infection and is enhanced by 'Lys-63'-linked ubiquitination of the CARD domains that promotes interaction with VCP/p97 and subsequent recruitment of RNF125. Within a negative feedback loop involving SIGLEC10 and PTPN11, 'Lys-48' ubiquitination at Lys-812 by CBL also elicits the proteasomal degradation of RIGI. Deubiquitinated by CYLD, a protease that selectively cleaves 'Lys-63'-linked ubiquitin chains. Also probably deubiquitinated by USP17L2/USP17 that cleaves 'Lys-48'- and 'Lys-63'-linked ubiquitin chains and positively regulates the receptor. Ubiquitinated by TRIM40 via 'Lys-48'-linked ubiquitination; leading to proteasomal degradation. Deubiquitinated by USP27X that cleaves 'Lys-63'-linked ubiquitin chains and inhibits the innate immune receptor activity. Deubiquitinated by USP3 that also cleaves 'Lys-63'-linked ubiquitin chains and inhibits the innate immune receptor activity. Undergoes 'Lys-48'-linked ubiquitination catalyzed by MARCHF5 at Lys-193 and Lys-203, leading to proteasomal degradation. Post-translationally, phosphorylated at Ser-8 and Thr-170; these phosphorylations suppresse the TRIM25-mediated 'Lys-63'-linked ubiquitination of RIG-I and thereby prevents RIG-I downstream signaling. Dephosphorylated by phosphatases PPP1CA/PPP1CC; this step is essential to activate RIGI and initiate downstream signaling. ISGylated. Conjugated to ubiquitin-like protein ISG15 upon IFN-beta stimulation. ISGylation negatively regulates its function in antiviral signaling response. In terms of processing, sumoylated, probably by MUL1; inhibiting its polyubiquitination. Post-translationally, acetylated in response to RNA virus infection. Deacetylated by HDAC6 in the presence of viral mRNAs which is required for detection of viral RNA by RIGI. (Microbial infection) Deamidated on Asn-495 and Asn-549 by herpes simplex virus 1 protein UL37. These modifications eliminate RIGI detection of viral RNA and restriction of viral replication. In terms of processing, degraded via selective autophagy following interaction with IRGM. IRGM promotes RIGI recruitment to autophagosome membranes, promoting its SQSTM1/p62-dependent autophagic degradation. Post-translationally, (Microbial infection) Cleaved by the protease 3C of coxsackievirus B3, poliovirus and enterovirus 71 allowing the virus to disrupt the host type I interferon production. (Microbial infection) Phosphorylated at Ser-8 by herpes simplex virus 1 protein US3 leading to inhibition of critical RIGI activation steps. Present in vascular smooth cells (at protein level).

It localises to the cytoplasm. It is found in the cell projection. Its subcellular location is the ruffle membrane. The protein localises to the cytoskeleton. The protein resides in the cell junction. It localises to the tight junction. It carries out the reaction ATP + H2O = ADP + phosphate + H(+). Its function is as follows. Innate immune receptor that senses cytoplasmic viral nucleic acids and activates a downstream signaling cascade leading to the production of type I interferons and pro-inflammatory cytokines. Forms a ribonucleoprotein complex with viral RNAs on which it homooligomerizes to form filaments. The homooligomerization allows the recruitment of RNF135 an E3 ubiquitin-protein ligase that activates and amplifies the RIG-I-mediated antiviral signaling in an RNA length-dependent manner through ubiquitination-dependent and -independent mechanisms. Upon activation, associates with mitochondria antiviral signaling protein (MAVS/IPS1) that activates the IKK-related kinases TBK1 and IKBKE which in turn phosphorylate the interferon regulatory factors IRF3 and IRF7, activating transcription of antiviral immunological genes including the IFN-alpha and IFN-beta interferons. Ligands include 5'-triphosphorylated ssRNAs and dsRNAs but also short dsRNAs (&lt;1 kb in length). In addition to the 5'-triphosphate moiety, blunt-end base pairing at the 5'-end of the RNA is very essential. Overhangs at the non-triphosphorylated end of the dsRNA RNA have no major impact on its activity. A 3'overhang at the 5'triphosphate end decreases and any 5'overhang at the 5' triphosphate end abolishes its activity. Detects both positive and negative strand RNA viruses including members of the families Paramyxoviridae: Human respiratory syncytial virus and measles virus (MeV), Rhabdoviridae: vesicular stomatitis virus (VSV), Orthomyxoviridae: influenza A and B virus, Flaviviridae: Japanese encephalitis virus (JEV), hepatitis C virus (HCV), dengue virus (DENV) and west Nile virus (WNV). It also detects rotaviruses and reoviruses. Detects and binds to SARS-CoV-2 RNAs which is inhibited by m6A RNA modifications. Also involved in antiviral signaling in response to viruses containing a dsDNA genome such as Epstein-Barr virus (EBV). Detects dsRNA produced from non-self dsDNA by RNA polymerase III, such as Epstein-Barr virus-encoded RNAs (EBERs). May play important roles in granulocyte production and differentiation, bacterial phagocytosis and in the regulation of cell migration. The chain is Antiviral innate immune response receptor RIG-I from Homo sapiens (Human).